We begin with the raw amino-acid sequence, 300 residues long: Acetylglutamate kinase (300 aa).

Substrate contacts are provided by residues 73–74, Arg-95, and Asn-197; that span reads GG.

The protein belongs to the acetylglutamate kinase family. ArgB subfamily.

It is found in the cytoplasm. It catalyses the reaction N-acetyl-L-glutamate + ATP = N-acetyl-L-glutamyl 5-phosphate + ADP. It participates in amino-acid biosynthesis; L-arginine biosynthesis; N(2)-acetyl-L-ornithine from L-glutamate: step 2/4. In terms of biological role, catalyzes the ATP-dependent phosphorylation of N-acetyl-L-glutamate. The polypeptide is Acetylglutamate kinase (Bordetella petrii (strain ATCC BAA-461 / DSM 12804 / CCUG 43448)).